Here is a 274-residue protein sequence, read N- to C-terminus: Large ribosomal subunit protein uL2c (274 aa).

Disordered stretches follow at residues 1 to 22 and 225 to 254; these read MAIHLYKTSTPSTRNGAVDSQV and PVDHPHGGGEGRAPIGRKKPVTPWGYPALG.

It belongs to the universal ribosomal protein uL2 family. Part of the 50S ribosomal subunit.

It localises to the plastid. Its subcellular location is the chloroplast. The chain is Large ribosomal subunit protein uL2c (rpl2) from Sinapis alba (White mustard).